Here is a 286-residue protein sequence, read N- to C-terminus: 4-hydroxybenzoate octaprenyltransferase (286 aa).

The next 9 helical transmembrane spans lie at 19–39 (AGWL…SHGF), 42–62 (WHLL…GCCV), 92–112 (ALVL…TTNA), 115–135 (IAWS…KRYV), 137–157 (MPQA…FAAV), 161–181 (VPLL…AYDT), 206–226 (FDVA…ALAL), 233–253 (AIYW…GWLI), and 264–284 (AFRL…LSYL).

The protein belongs to the UbiA prenyltransferase family. Mg(2+) is required as a cofactor.

It is found in the cell inner membrane. The enzyme catalyses all-trans-octaprenyl diphosphate + 4-hydroxybenzoate = 4-hydroxy-3-(all-trans-octaprenyl)benzoate + diphosphate. It participates in cofactor biosynthesis; ubiquinone biosynthesis. Catalyzes the prenylation of para-hydroxybenzoate (PHB) with an all-trans polyprenyl group. Mediates the second step in the final reaction sequence of ubiquinone-8 (UQ-8) biosynthesis, which is the condensation of the polyisoprenoid side chain with PHB, generating the first membrane-bound Q intermediate 3-octaprenyl-4-hydroxybenzoate. The chain is 4-hydroxybenzoate octaprenyltransferase from Polaromonas sp. (strain JS666 / ATCC BAA-500).